The following is a 593-amino-acid chain: DNA mismatch repair protein MutL (593 aa).

The protein belongs to the DNA mismatch repair MutL/HexB family.

Its function is as follows. This protein is involved in the repair of mismatches in DNA. It is required for dam-dependent methyl-directed DNA mismatch repair. May act as a 'molecular matchmaker', a protein that promotes the formation of a stable complex between two or more DNA-binding proteins in an ATP-dependent manner without itself being part of a final effector complex. The chain is DNA mismatch repair protein MutL from Leptospira interrogans serogroup Icterohaemorrhagiae serovar copenhageni (strain Fiocruz L1-130).